A 199-amino-acid polypeptide reads, in one-letter code: OPA3-like protein (199 aa).

Positions 98–141 (RSSEKDKKKEEALQNRFKNLEEKLEVQQETINNLTNVIEAIQSS) form a coiled coil.

It belongs to the OPA3 family.

The polypeptide is OPA3-like protein (Dictyostelium discoideum (Social amoeba)).